Consider the following 706-residue polypeptide: Polyribonucleotide nucleotidyltransferase (706 aa).

The Mg(2+) site is built by D486 and D492. A KH domain is found at 553–612 (PRIYTMKINPEKIKDVIGKGGSVIRALTDETGTTIEIEDDGTIKIAATDGDKAKHAIRRI). The region spanning 622 to 690 (NRIYAGKVTR…RQGRIRLSMK (69 aa)) is the S1 motif domain.

It belongs to the polyribonucleotide nucleotidyltransferase family. Component of the RNA degradosome, which is a multiprotein complex involved in RNA processing and mRNA degradation. It depends on Mg(2+) as a cofactor.

The protein localises to the cytoplasm. It carries out the reaction RNA(n+1) + phosphate = RNA(n) + a ribonucleoside 5'-diphosphate. Its function is as follows. Involved in mRNA degradation. Catalyzes the phosphorolysis of single-stranded polyribonucleotides processively in the 3'- to 5'-direction. This chain is Polyribonucleotide nucleotidyltransferase, found in Yersinia enterocolitica serotype O:8 / biotype 1B (strain NCTC 13174 / 8081).